Consider the following 429-residue polypeptide: Histidine--tRNA ligase (429 aa).

The protein belongs to the class-II aminoacyl-tRNA synthetase family. In terms of assembly, homodimer.

The protein resides in the cytoplasm. It carries out the reaction tRNA(His) + L-histidine + ATP = L-histidyl-tRNA(His) + AMP + diphosphate + H(+). This Alkalilimnicola ehrlichii (strain ATCC BAA-1101 / DSM 17681 / MLHE-1) protein is Histidine--tRNA ligase.